The chain runs to 1191 residues: Solute carrier family 12 member 2 (1191 aa).

The disordered stretch occupies residues 1-166 (MEPAFPASSA…MSEGSLHSSG (166 aa)). The Cytoplasmic segment spans residues 1 to 258 (MEPAFPASSA…ADNKGVVKFG (258 aa)). 4 stretches are compositionally biased toward low complexity: residues 13–25 (QSQSGPEPGAGQQ), 59–69 (KGQTAAQPAAA), 80–99 (AAAPSPASPAAAAEPPAAAA), and 131–141 (SASSAHGGHQP). Residues 142 to 155 (PSESMNGYPQNGDT) are compositionally biased toward polar residues. Phosphothreonine; by OXSR1 and STK39 is present on residues Thr-175, Thr-179, and Thr-184. A phosphothreonine mark is found at Thr-189 and Thr-202. A discontinuously helical transmembrane segment spans residues 259–288 (WIKGVLVRCMLNIWGVMLFIRLSWIVGHAG). Leu-269 lines the Na(+) pocket. Asn-270 and Ile-271 together coordinate K(+). Trp-272 is a Na(+) binding site. Gly-273, Val-274, and Met-275 together coordinate chloride. A helical membrane pass occupies residues 289-308 (IGLALLVIGTATVVTTITGL). At 309-339 (STSAITTNGFVRGGGAYYLISRSLGPEFGGA) the chain is on the cytoplasmic side. A helical transmembrane segment spans residues 340-367 (IGLIFAFANAVAVAMYVVGFAETVRDLL). Phe-344 provides a ligand contact to chloride. Position 355 (Tyr-355) interacts with K(+). Residues 368–377 (VEHNALMIDE) are Extracellular-facing. Residues 378-401 (MSDIRIIGSVTIVVLFGISVAGME) traverse the membrane as a helical segment. Residues 402–404 (WEA) lie on the Cytoplasmic side of the membrane. Residues 405 to 426 (KAQIVLLGILLLAIVNFTVGTF) form a helical membrane-spanning segment. The Extracellular portion of the chain corresponds to 427–458 (IPANDKRAKGFFNYRGEIFSENFVPDFRDGED). The discontinuously helical transmembrane segment at 459-476 (FFSVFAIFFPAATGILAG) threads the bilayer. K(+)-binding residues include Pro-468, Ala-469, and Thr-471. Chloride-binding residues include Pro-468 and Ala-469. The chloride site is built by Gly-472 and Ile-473. At 477–491 (ANISGDLADPQLAIP) the chain is on the cytoplasmic side. Residues 492–513 (KGTLLAILITTIVYAGAAVSVG) traverse the membrane as a helical segment. At 514–571 (SCIVREATGNLTDAIIPGTVTNCTNVACKLGFNFSSCATNKCSYGLMNDFQVMSLVSG) the chain is on the extracellular side. 2 N-linked (GlcNAc...) asparagine glycosylation sites follow: Asn-523 and Asn-535. An intrachain disulfide couples Cys-536 to Cys-541. N-linked (GlcNAc...) asparagine glycosylation occurs at Asn-546. Cysteines 550 and 555 form a disulfide. A helical membrane pass occupies residues 572–596 (FGPLITAGIFSATLSSALASLVSAP). Na(+) contacts are provided by Ala-583, Ser-586, and Ser-587. At 597 to 624 (KIFQALCKDNIYPGLHVFSVGYGKNNEP) the chain is on the cytoplasmic side. 2 consecutive transmembrane segments (helical) span residues 625 to 645 (LRGYVLTFFIGLGFILIAELN) and 646 to 664 (VIAPIISNFFLASYALINF). Residues Phe-655 and Tyr-659 each contribute to the chloride site. The Cytoplasmic portion of the chain corresponds to 665 to 687 (SVFHASLAKSPGWRPAFRFYNMW). The next 2 helical transmembrane spans lie at 688–705 (ISLIGAILCCGVMFVINW) and 706–718 (WAALLTNVIVLAL). Topologically, residues 719 to 1191 (YIYVTYKKPD…NHQSVLTFYS (473 aa)) are cytoplasmic. The segment at 734-751 (STQALTYLNALQHAIRLT) is scissor helix. The interval 929-972 (HSDADSSKPSSKSVSETNSPAVCQDQKDEEDDGKASTQPLLKKE) is disordered. A compositionally biased stretch (low complexity) spans 935–948 (SKPSSKSVSETNSP). Thr-1114 is subject to Phosphothreonine.

This sequence belongs to the SLC12A transporter family. Homodimer. Phosphorylated at Thr-175, Thr-179 and Thr-184 by OXSR1/OSR1 and STK39/SPAK downstream of WNK kinases (WNK1, WNK2, WNK3 or WNK4), promoting its activity. Strongly expressed in rectal gland, brain, gill and intestine. Also detected at lower levels in heart, kidney, and testis.

Its subcellular location is the basolateral cell membrane. It carries out the reaction K(+)(out) + 2 chloride(out) + Na(+)(out) = K(+)(in) + 2 chloride(in) + Na(+)(in). Activated following phosphorylation by OXSR1/OSR1 and STK39/SPAK. Inhibited by bumetanide. In terms of biological role, cation-chloride cotransporter which mediates the electroneutral transport of chloride, potassium and/or sodium ions across the membrane. Plays a vital role in the regulation of ionic balance and cell volume. The protein is Solute carrier family 12 member 2 (SLC12A2) of Squalus acanthias (Spiny dogfish).